Consider the following 723-residue polypeptide: Choline transporter-like protein 4 (723 aa).

The Cytoplasmic segment spans residues 1–36 (MGKKKQEEEQNSSEYGAPAQYDPTFNGPIHKRSCTD). Residues 37–57 (IICCVLFMLVITGYMVVGILA) traverse the membrane as a helical segment. Residues 58 to 245 (WLYGDPRHVL…RIFEDFAKTW (188 aa)) are Extracellular-facing. 4 N-linked (GlcNAc...) asparagine glycosylation sites follow: N71, N202, N211, and N219. Residues 246-266 (QWIVAGLVIAMVVSVLFLLLL) traverse the membrane as a helical segment. Residues 267 to 269 (RFT) are Cytoplasmic-facing. A helical transmembrane segment spans residues 270–290 (APVLIWILIFGVLAVGAFGIW). The Extracellular segment spans residues 291–325 (YCYNDYMSLASSNLTFSNVGFTTNVQVYLQVRDTW). Residue N303 is glycosylated (N-linked (GlcNAc...) asparagine). Residues 326-346 (LAFLIILCIVEAVLILALIFL) traverse the membrane as a helical segment. Topologically, residues 347-374 (RTRILIAIALIQETSKALGHMMSTLLYP) are cytoplasmic. The helical transmembrane segment at 375-395 (VVTFVLLLVCVSYWGITALYL) threads the bilayer. Over 396-464 (ATSGAPIYKV…RNLFNLQIYN (69 aa)) the chain is Extracellular. N409, N421, and N430 each carry an N-linked (GlcNAc...) asparagine glycan. The helical transmembrane segment at 465–485 (VVAFLWCVNFVIALGHCTLAG) threads the bilayer. At 486–516 (AFASYYWAFSKPADIPTFPLTQSFMRALRYH) the chain is on the cytoplasmic side. Residues 517–537 (VGSLAFGALILTLVQIVRIIL) form a helical membrane-spanning segment. Over 538-578 (EYLDHKFKAAQNPCARFLMCCLKCCFWCLEKFIKFINRNAY) the chain is Extracellular. A helical transmembrane segment spans residues 579 to 599 (IMIAIYGKNFCVSAKNAFFLL). Residues 600–615 (MRNIVRVVVLDKVTDL) lie on the Cytoplasmic side of the membrane. The helical transmembrane segment at 616–636 (LLFFGKLLVVGGIGVLAFFFF) threads the bilayer. Residues 637–655 (SGRIQLPGNTFQTAALNYY) are Extracellular-facing. The helical transmembrane segment at 656–676 (WMPIITVVFGAYLIAHGFFSV) threads the bilayer. The Cytoplasmic portion of the chain corresponds to 677–723 (YNMGVDTLFLCFLEDLERNDGSAEKPYFMSKNLMKILNKKNKQPKTG).

Belongs to the CTL (choline transporter-like) family.

The protein localises to the membrane. It localises to the apical cell membrane. The enzyme catalyses choline(out) + n H(+)(in) = choline(in) + n H(+)(out). It carries out the reaction thiamine diphosphate(out) = thiamine diphosphate(in). Functionally, choline transporter that seems to play a role in the choline-acetylcholine system and is required to the efferent innervation of hair cells in the olivocochlear bundle for the maintenance of physiological function of outer hair cells and the protection of hair cells from acoustic injury. Also described as a thiamine pyrophosphate transporter. The sequence is that of Choline transporter-like protein 4 (slc44a4) from Danio rerio (Zebrafish).